We begin with the raw amino-acid sequence, 98 residues long: Aspartyl/glutamyl-tRNA(Asn/Gln) amidotransferase subunit C (98 aa).

The disordered stretch occupies residues 70 to 98 (PSLTPEQALSGAPAQEQQRFKVPQILGED).

The protein belongs to the GatC family. As to quaternary structure, heterotrimer of A, B and C subunits.

The enzyme catalyses L-glutamyl-tRNA(Gln) + L-glutamine + ATP + H2O = L-glutaminyl-tRNA(Gln) + L-glutamate + ADP + phosphate + H(+). It catalyses the reaction L-aspartyl-tRNA(Asn) + L-glutamine + ATP + H2O = L-asparaginyl-tRNA(Asn) + L-glutamate + ADP + phosphate + 2 H(+). In terms of biological role, allows the formation of correctly charged Asn-tRNA(Asn) or Gln-tRNA(Gln) through the transamidation of misacylated Asp-tRNA(Asn) or Glu-tRNA(Gln) in organisms which lack either or both of asparaginyl-tRNA or glutaminyl-tRNA synthetases. The reaction takes place in the presence of glutamine and ATP through an activated phospho-Asp-tRNA(Asn) or phospho-Glu-tRNA(Gln). The chain is Aspartyl/glutamyl-tRNA(Asn/Gln) amidotransferase subunit C from Streptomyces avermitilis (strain ATCC 31267 / DSM 46492 / JCM 5070 / NBRC 14893 / NCIMB 12804 / NRRL 8165 / MA-4680).